The primary structure comprises 362 residues: Chorismate synthase (362 aa).

NADP(+) contacts are provided by Arg-48 and Arg-54. Residues 125 to 127 (RSS), 238 to 239 (NA), Gly-286, 301 to 305 (KPTSS), and Arg-327 contribute to the FMN site.

It belongs to the chorismate synthase family. As to quaternary structure, homotetramer. It depends on FMNH2 as a cofactor.

It carries out the reaction 5-O-(1-carboxyvinyl)-3-phosphoshikimate = chorismate + phosphate. It participates in metabolic intermediate biosynthesis; chorismate biosynthesis; chorismate from D-erythrose 4-phosphate and phosphoenolpyruvate: step 7/7. Functionally, catalyzes the anti-1,4-elimination of the C-3 phosphate and the C-6 proR hydrogen from 5-enolpyruvylshikimate-3-phosphate (EPSP) to yield chorismate, which is the branch point compound that serves as the starting substrate for the three terminal pathways of aromatic amino acid biosynthesis. This reaction introduces a second double bond into the aromatic ring system. The polypeptide is Chorismate synthase (Granulibacter bethesdensis (strain ATCC BAA-1260 / CGDNIH1)).